The primary structure comprises 482 residues: Glycogen synthase 2 (482 aa).

Lys18 serves as a coordination point for ADP-alpha-D-glucose.

This sequence belongs to the glycosyltransferase 1 family. Bacterial/plant glycogen synthase subfamily.

It catalyses the reaction [(1-&gt;4)-alpha-D-glucosyl](n) + ADP-alpha-D-glucose = [(1-&gt;4)-alpha-D-glucosyl](n+1) + ADP + H(+). Its pathway is glycan biosynthesis; glycogen biosynthesis. Functionally, synthesizes alpha-1,4-glucan chains using ADP-glucose. The chain is Glycogen synthase 2 from Bradyrhizobium diazoefficiens (strain JCM 10833 / BCRC 13528 / IAM 13628 / NBRC 14792 / USDA 110).